The following is a 372-amino-acid chain: Glutamate 5-kinase (372 aa).

Lys14 is an ATP binding site. Substrate contacts are provided by Ser54, Asp141, and Asn153. 173–174 (TD) contributes to the ATP binding site. Residues 280–358 (RGHVVIDAGA…GEIETVLGYM (79 aa)) enclose the PUA domain.

It belongs to the glutamate 5-kinase family.

It localises to the cytoplasm. The enzyme catalyses L-glutamate + ATP = L-glutamyl 5-phosphate + ADP. It functions in the pathway amino-acid biosynthesis; L-proline biosynthesis; L-glutamate 5-semialdehyde from L-glutamate: step 1/2. Catalyzes the transfer of a phosphate group to glutamate to form L-glutamate 5-phosphate. The sequence is that of Glutamate 5-kinase from Burkholderia ambifaria (strain ATCC BAA-244 / DSM 16087 / CCUG 44356 / LMG 19182 / AMMD) (Burkholderia cepacia (strain AMMD)).